The primary structure comprises 499 residues: Ethanolamine-phosphate phospho-lyase (499 aa).

Lys-278 is subject to N6-(pyridoxal phosphate)lysine.

Belongs to the class-III pyridoxal-phosphate-dependent aminotransferase family. As to quaternary structure, homotetramer. Pyridoxal 5'-phosphate is required as a cofactor.

The protein localises to the mitochondrion. It carries out the reaction phosphoethanolamine + H2O = acetaldehyde + NH4(+) + phosphate. Functionally, catalyzes the pyridoxal-phosphate-dependent breakdown of phosphoethanolamine, converting it to ammonia, inorganic phosphate and acetaldehyde. In Mus musculus (Mouse), this protein is Ethanolamine-phosphate phospho-lyase (Etnppl).